The sequence spans 169 residues: Large ribosomal subunit protein uL10 (169 aa).

The protein belongs to the universal ribosomal protein uL10 family. In terms of assembly, part of the ribosomal stalk of the 50S ribosomal subunit. The N-terminus interacts with L11 and the large rRNA to form the base of the stalk. The C-terminus forms an elongated spine to which L12 dimers bind in a sequential fashion forming a multimeric L10(L12)X complex.

Its function is as follows. Forms part of the ribosomal stalk, playing a central role in the interaction of the ribosome with GTP-bound translation factors. The chain is Large ribosomal subunit protein uL10 from Rickettsia typhi (strain ATCC VR-144 / Wilmington).